A 263-amino-acid polypeptide reads, in one-letter code: HTH-type transcriptional repressor NanR (263 aa).

Positions 1–23 (MSPMNAFDPQAEDSTTTIGRNLR) are disordered. Positions 30–98 (KKLSEMVEEE…NGERARVSRP (69 aa)) constitute an HTH gntR-type domain. The H-T-H motif DNA-binding region spans 58 to 77 (ERELMAFFNVGRPSVREALA).

The protein belongs to the NanR family.

Transcriptional repressor that controls expression of the genes required for the catabolism of sialic acids. In Escherichia coli O45:K1 (strain S88 / ExPEC), this protein is HTH-type transcriptional repressor NanR.